The following is a 353-amino-acid chain: MERGSPGSSKSVSTFTPDSMSTYVSNCVVCGRLTSLFNYGAHSCSACGSFLRRTLASSKFLDDCKYSGNCFENFKRAIHFECKFCRLHKCVQKGMLDLSRYTHLERLICELSEFDSKRETLFLTMTVSNGFKAEELMWQSSVSLVKKPPHLVFNSHDWGFMNQVTIIDFLKKLEFSKFLSSQDLRSFLKCTHFTQVILKSAVISYNANQNYMSFPNKIDIFPETVTEGTSISVNLQNRIRCRLVNRLIELKVTHEEMLLLCAIAFSNPAIPELSENGRTLLNSYQNVYRSALFQYCSTAYQRNGPSRFNDLLFLLHVVTKTHDDIKKYFTLFQFFQPTEQPSQVHQDVIEFIN.

The segment at residues 24–102 (VSNCVVCGRL…KGMLDLSRYT (79 aa)) is a DNA-binding region (nuclear receptor). NR C4-type zinc fingers lie at residues 27-47 (CVVCGRLTSLFNYGAHSCSAC) and 64-85 (CKYSGNCFENFKRAIHFECKFC). Positions 119–351 (ETLFLTMTVS…SQVHQDVIEF (233 aa)) constitute an NR LBD domain. The segment at 340 to 351 (QPSQVHQDVIEF) is AF-2.

Belongs to the nuclear hormone receptor family.

Its subcellular location is the nucleus. Its function is as follows. Ligand-activated transcription factor. Involved in lifespan extension in a manner dependent upon mitochondrial function. This is Nuclear hormone receptor family member nhr-27 from Caenorhabditis elegans.